The sequence spans 314 residues: Replication initiation protein (314 aa).

A compositionally biased stretch (polar residues) spans 1 to 10 (MSKNNHANHS). The segment at 1-25 (MSKNNHANHSNHLENHDLDNFSKTG) is disordered. Residues 11–20 (NHLENHDLDN) are compositionally biased toward basic and acidic residues.

This sequence belongs to the plasmid replication initiation factor family.

This protein is probably a specific topoisomerase involved in initiating replication. This protein is specifically required and may be rate-limiting for replication of the plasmid in vivo. The chain is Replication initiation protein (repN) from Staphylococcus aureus.